The following is a 477-amino-acid chain: Glycogen synthase (477 aa).

ADP-alpha-D-glucose is bound at residue Lys-15.

It belongs to the glycosyltransferase 1 family. Bacterial/plant glycogen synthase subfamily.

It catalyses the reaction [(1-&gt;4)-alpha-D-glucosyl](n) + ADP-alpha-D-glucose = [(1-&gt;4)-alpha-D-glucosyl](n+1) + ADP + H(+). The protein operates within glycan biosynthesis; glycogen biosynthesis. In terms of biological role, synthesizes alpha-1,4-glucan chains using ADP-glucose. In Salmonella choleraesuis (strain SC-B67), this protein is Glycogen synthase.